A 216-amino-acid chain; its full sequence is Adenylate kinase (216 aa).

ATP is bound at residue 10-15 (GAGKGT). The tract at residues 30–59 (STGDMFRAAMKNETALGLEAKSYIDKGELV) is NMP. Residues threonine 31, arginine 36, 57 to 59 (ELV), 85 to 88 (GFPR), and glutamine 92 each bind AMP. The LID stretch occupies residues 126 to 164 (GRFICRTCGATYHKLFNPPKVEGTCDRCGGHEFYQREDD). Position 127 (arginine 127) interacts with ATP. Residues cysteine 130 and cysteine 133 each coordinate Zn(2+). 136-137 (TY) contributes to the ATP binding site. 2 residues coordinate Zn(2+): cysteine 150 and cysteine 153. The AMP site is built by arginine 161 and arginine 172. Position 200 (arginine 200) interacts with ATP.

This sequence belongs to the adenylate kinase family. As to quaternary structure, monomer.

Its subcellular location is the cytoplasm. The catalysed reaction is AMP + ATP = 2 ADP. Its pathway is purine metabolism; AMP biosynthesis via salvage pathway; AMP from ADP: step 1/1. Its function is as follows. Catalyzes the reversible transfer of the terminal phosphate group between ATP and AMP. Plays an important role in cellular energy homeostasis and in adenine nucleotide metabolism. The sequence is that of Adenylate kinase from Enterococcus faecalis (strain ATCC 700802 / V583).